Reading from the N-terminus, the 424-residue chain is Histidinol dehydrogenase homolog (424 aa).

Q250 and H253 together coordinate Zn(2+). Residues E318 and H319 each act as proton acceptor in the active site. Zn(2+)-binding residues include D352 and H411.

Belongs to the histidinol dehydrogenase family. Zn(2+) serves as cofactor.

This Shouchella clausii (strain KSM-K16) (Alkalihalobacillus clausii) protein is Histidinol dehydrogenase homolog.